We begin with the raw amino-acid sequence, 277 residues long: Pantothenate synthetase (277 aa).

An ATP-binding site is contributed by 26–33 (MGYLHQGH). His33 (proton donor) is an active-site residue. Gln57 is a binding site for (R)-pantoate. Gln57 contacts beta-alanine. An ATP-binding site is contributed by 143–146 (GQKD). Gln149 serves as a coordination point for (R)-pantoate. ATP contacts are provided by residues Val172 and 180 to 183 (LSSR).

It belongs to the pantothenate synthetase family. As to quaternary structure, homodimer.

It localises to the cytoplasm. It carries out the reaction (R)-pantoate + beta-alanine + ATP = (R)-pantothenate + AMP + diphosphate + H(+). Its pathway is cofactor biosynthesis; (R)-pantothenate biosynthesis; (R)-pantothenate from (R)-pantoate and beta-alanine: step 1/1. Catalyzes the condensation of pantoate with beta-alanine in an ATP-dependent reaction via a pantoyl-adenylate intermediate. The protein is Pantothenate synthetase of Chloroflexus aggregans (strain MD-66 / DSM 9485).